Consider the following 142-residue polypeptide: Large ribosomal subunit protein uL11 (142 aa).

It belongs to the universal ribosomal protein uL11 family. Part of the ribosomal stalk of the 50S ribosomal subunit. Interacts with L10 and the large rRNA to form the base of the stalk. L10 forms an elongated spine to which L12 dimers bind in a sequential fashion forming a multimeric L10(L12)X complex. One or more lysine residues are methylated.

Functionally, forms part of the ribosomal stalk which helps the ribosome interact with GTP-bound translation factors. The chain is Large ribosomal subunit protein uL11 from Buchnera aphidicola subsp. Schizaphis graminum (strain Sg).